The following is a 102-amino-acid chain: NADH-quinone oxidoreductase subunit K 2 (102 aa).

Helical transmembrane passes span 4 to 24 (ITPVHYLALSAALLLIGTVGV), 30 to 50 (IVIILMSIELILNAVNINLIA), and 62 to 82 (IFAIFVITDAVAEAAVGLGIL).

This sequence belongs to the complex I subunit 4L family. NDH-1 is composed of 14 different subunits. Subunits NuoA, H, J, K, L, M, N constitute the membrane sector of the complex.

It is found in the cell inner membrane. The catalysed reaction is a quinone + NADH + 5 H(+)(in) = a quinol + NAD(+) + 4 H(+)(out). In terms of biological role, NDH-1 shuttles electrons from NADH, via FMN and iron-sulfur (Fe-S) centers, to quinones in the respiratory chain. The immediate electron acceptor for the enzyme in this species is believed to be ubiquinone. Couples the redox reaction to proton translocation (for every two electrons transferred, four hydrogen ions are translocated across the cytoplasmic membrane), and thus conserves the redox energy in a proton gradient. The sequence is that of NADH-quinone oxidoreductase subunit K 2 from Solibacter usitatus (strain Ellin6076).